We begin with the raw amino-acid sequence, 197 residues long: Histone chaperone asf1b-B (197 aa).

This sequence belongs to the ASF1 family. Interacts with histone H3 and histone H4.

It localises to the nucleus. Histone chaperone that facilitates histone deposition and histone exchange and removal during nucleosome assembly and disassembly. This Danio rerio (Zebrafish) protein is Histone chaperone asf1b-B (asf1bb).